The primary structure comprises 291 residues: Protein-export membrane protein SecF (291 aa).

6 helical membrane passes run 19 to 39 (LVVI…SWYV), 134 to 154 (LALG…FLMF), 156 to 176 (VFVP…ISVA), 187 to 209 (LGTV…LLNN), 226 to 246 (MRTG…MAAV), and 256 to 278 (AAIG…LLNL).

This sequence belongs to the SecD/SecF family. SecF subfamily. As to quaternary structure, part of the protein translocation apparatus. Forms a complex with SecD.

The protein resides in the cell membrane. Its function is as follows. Involved in protein export. This chain is Protein-export membrane protein SecF, found in Haloquadratum walsbyi (strain DSM 16790 / HBSQ001).